The following is a 283-amino-acid chain: Tetrahydroxynaphthalene reductase (283 aa).

Residues 1-21 (MPAVTQPRGESKYDAIPGPLG) form a disordered region. Residue 39-63 (RGIGREMAMELGRRGCKVIVNYANS) coordinates NADP(+). Ser164 lines the substrate pocket. Tyr178 serves as the catalytic Proton acceptor.

The protein belongs to the short-chain dehydrogenases/reductases (SDR) family. As to quaternary structure, homotetramer.

It catalyses the reaction scytalone + NADP(+) = naphthalene-1,3,6,8-tetrol + NADPH + H(+). Its pathway is pigment biosynthesis; melanin biosynthesis. In terms of biological role, catalyzes the NADPH-dependent reduction of 1,3,6,8-tetrahydroxynaphthalene (T4HN) into (+)-scytalone and 1,3,8-trihydroxynaphthalene into (-)-vermelone. This enzyme is the biochemical target of several commercially important fungicides which are used to prevent blast disease in rice plants. This Pyricularia oryzae (strain 70-15 / ATCC MYA-4617 / FGSC 8958) (Rice blast fungus) protein is Tetrahydroxynaphthalene reductase.